The following is a 697-amino-acid chain: Phosphatase and actin regulator 4-B (697 aa).

The stretch at 42-67 is one RPEL 1 repeat; it reads EVLERKISMRKPREELVKRGLIVDVP. Disordered stretches follow at residues 63-381 and 450-569; these read IVDV…LTLA and LKVP…SKDE. Positions 189–202 are enriched in basic and acidic residues; it reads HVPEKTSEKYRPKS. Composition is skewed to pro residues over residues 317–326 and 370–380; these read PSPPLPPKRA and APNPPVPPLTL. 3 stretches are compositionally biased toward acidic residues: residues 454–469, 501–514, and 522–532; these read DDDD…DESL, QEED…DTDS, and EEDEDEEEEET. RPEL repeat units follow at residues 579–604 and 616–641; these read TQLN…QKNE and RRLT…RFNE.

The protein belongs to the phosphatase and actin regulator family. As to quaternary structure, binds ppp1ca and actin.

The protein localises to the cytoplasm. It localises to the cell projection. Its subcellular location is the lamellipodium. In terms of biological role, regulator of protein phosphatase 1 (PP1) required for neural tube and optic fissure closure, and enteric neural crest cell (ENCCs) migration during development. Acts as an activator of PP1. During neural tube closure, localizes to the ventral neural tube and activates PP1, leading to down-regulate cell proliferation within cranial neural tissue and the neural retina. Also acts as a regulator of migration of enteric neural crest cells (ENCCs) by activating PP1, leading to repression of the integrin signaling through the rho/rock pathway. The sequence is that of Phosphatase and actin regulator 4-B (phactr4-b) from Xenopus laevis (African clawed frog).